The chain runs to 351 residues: Phosphoribosylformylglycinamidine cyclo-ligase (351 aa).

Belongs to the AIR synthase family.

It localises to the cytoplasm. It catalyses the reaction 2-formamido-N(1)-(5-O-phospho-beta-D-ribosyl)acetamidine + ATP = 5-amino-1-(5-phospho-beta-D-ribosyl)imidazole + ADP + phosphate + H(+). It functions in the pathway purine metabolism; IMP biosynthesis via de novo pathway; 5-amino-1-(5-phospho-D-ribosyl)imidazole from N(2)-formyl-N(1)-(5-phospho-D-ribosyl)glycinamide: step 2/2. The polypeptide is Phosphoribosylformylglycinamidine cyclo-ligase (Burkholderia pseudomallei (strain 668)).